Here is a 256-residue protein sequence, read N- to C-terminus: Protein YIPF5 (256 aa).

Topologically, residues 1-125 are cytoplasmic; it reads MSNFDNFNTD…ADGSIMNETD (125 aa). The helical transmembrane segment at 126–146 threads the bilayer; the sequence is LAGPMVFCLAFGATLLLAGKI. Residue Q147 is a topological domain, lumenal. The helical transmembrane segment at 148–168 threads the bilayer; sequence FGYVYGISAMGCLGMYCLLNL. Residues 169–172 are Cytoplasmic-facing; sequence MSMT. A helical transmembrane segment spans residues 173–193; it reads GVSFGCVSSVLGYCLLPMIIL. Topologically, residues 194 to 195 are lumenal; it reads ST. The chain crosses the membrane as a helical span at residues 196–216; the sequence is FAVIFSLQGILGIVLAALIIG. Residues 217-235 are Cytoplasmic-facing; sequence WCSFSASKIFISALAMDGQ. A helical transmembrane segment spans residues 236–256; the sequence is QLLVAYPCALLYGVFALISVF.

It belongs to the YIP1 family.

It is found in the endoplasmic reticulum membrane. Its subcellular location is the golgi apparatus. The protein localises to the cis-Golgi network membrane. Plays a role in transport between endoplasmic reticulum and Golgi. This chain is Protein YIPF5 (yipf5), found in Xenopus laevis (African clawed frog).